Consider the following 400-residue polypeptide: Imidazolonepropionase (400 aa).

Residues H70 and H72 each contribute to the Fe(3+) site. Residues H70 and H72 each coordinate Zn(2+). Residues R79, Y142, and H175 each contribute to the 4-imidazolone-5-propanoate site. Y142 provides a ligand contact to N-formimidoyl-L-glutamate. A Fe(3+)-binding site is contributed by H239. H239 is a binding site for Zn(2+). Q242 is a 4-imidazolone-5-propanoate binding site. A Fe(3+)-binding site is contributed by D314. D314 lines the Zn(2+) pocket. The N-formimidoyl-L-glutamate site is built by N316 and G318. T319 lines the 4-imidazolone-5-propanoate pocket.

This sequence belongs to the metallo-dependent hydrolases superfamily. HutI family. Zn(2+) serves as cofactor. The cofactor is Fe(3+).

It is found in the cytoplasm. It carries out the reaction 4-imidazolone-5-propanoate + H2O = N-formimidoyl-L-glutamate. Its pathway is amino-acid degradation; L-histidine degradation into L-glutamate; N-formimidoyl-L-glutamate from L-histidine: step 3/3. Catalyzes the hydrolytic cleavage of the carbon-nitrogen bond in imidazolone-5-propanoate to yield N-formimidoyl-L-glutamate. It is the third step in the universal histidine degradation pathway. The polypeptide is Imidazolonepropionase (Methylobacterium nodulans (strain LMG 21967 / CNCM I-2342 / ORS 2060)).